We begin with the raw amino-acid sequence, 292 residues long: Small ribosomal subunit protein uS3 (292 aa).

Residues 39–110 form the KH type-2 domain; that stretch reads IRLEIMKFLK…KISIKIKEVK (72 aa). The disordered stretch occupies residues 247–268; the sequence is KANERQSRAALNKKDGLSKDET.

This sequence belongs to the universal ribosomal protein uS3 family. In terms of assembly, part of the 30S ribosomal subunit. Forms a tight complex with proteins S10 and S14.

Its function is as follows. Binds the lower part of the 30S subunit head. Binds mRNA in the 70S ribosome, positioning it for translation. The protein is Small ribosomal subunit protein uS3 of Borrelia garinii subsp. bavariensis (strain ATCC BAA-2496 / DSM 23469 / PBi) (Borreliella bavariensis).